A 623-amino-acid chain; its full sequence is Scarecrow-like protein 22 (623 aa).

Disordered regions lie at residues 62–90 and 179–203; these read RSPSPFVSSSTTTLSSSHGGPSGGGAAAA and PNPGFFSDPPSSPPAKRLNSGQPGS. Over residues 63-80 the composition is skewed to low complexity; the sequence is SPSPFVSSSTTTLSSSHG. The GRAS domain maps to 235-622; sequence NDQDQSAVII…KELVTVSAWK (388 aa). The leucine repeat I (LRI) stretch occupies residues 242–311; sequence VIIDQLFSAA…ALHSLLQDSS (70 aa). A VHIID region spans residues 330 to 398; the sequence is YRAFSETSPF…SSAPSLKITA (69 aa). The VHIID motif lies at 361 to 365; it reads IHIVD. Residues 413-448 are leucine repeat II (LRII); that stretch reads FTEENLRSFAGETGVSFEIELLNMEILLNPTYWPLS. The tract at residues 458–545 is PFYRE; sequence IAVNLPISSM…RFCVQPSIQK (88 aa). An SAW region spans residues 548 to 622; the sequence is TNRYRWMERS…KELVTVSAWK (75 aa).

Belongs to the GRAS family. As to expression, expressed in seedlings, roots, leaves and flowers.

It is found in the nucleus. Its function is as follows. Probable transcription factor involved in plant development. The chain is Scarecrow-like protein 22 (SCL22) from Arabidopsis thaliana (Mouse-ear cress).